We begin with the raw amino-acid sequence, 315 residues long: Fucose-specific lectin (315 aa).

6 consecutive repeat copies span residues 2–53 (STPG…KNVI), 54–103 (GNAK…GGAK), 104–155 (FQVA…LGGA), 156–207 (LPGT…TIFD), 208–260 (RAPP…ITPV), and 261–315 (IQGS…LPPA). A 6 X approximate tandem repeats region spans residues 2 to 315 (STPGAQQVLF…QLGRSALPPA (314 aa)). Alpha-L-fucose contacts are provided by Arg25, Glu37, Trp44, Arg73, Glu85, Trp94, Gly98, Arg126, Glu138, Trp146, Thr150, Arg177, Gln189, Trp198, Arg230, and Gln242. Positions 244, 246, and 252 each coordinate Zn(2+). Residues Arg282 and Glu296 each coordinate alpha-L-fucose.

The protein belongs to the fungal fucose-specific lectin family. In terms of assembly, homodimer.

Its function is as follows. Multispecific lectin that is able to recognize L-fucose in all possible linkages. These could be found not only in decomposed plant matter in soil, which is the natural environment for A.fumigatus, but also in various epitopes on human tissues. Mediates binding of A.fumigatus conidia to airway mucin in a fucose dependent manner. Stimulates IL-8 production by human bronchial cells in a dose-dependent manner, contributing to the inflammatory response observed upon the exposure of a patient to A.fumigatus, and thus might be an important virulence factor involved in an early stage of A.fumigatus infection. This chain is Fucose-specific lectin, found in Aspergillus fumigatus (strain ATCC MYA-4609 / CBS 101355 / FGSC A1100 / Af293) (Neosartorya fumigata).